We begin with the raw amino-acid sequence, 180 residues long: ATP-dependent protease subunit HslV (180 aa).

Threonine 7 is an active-site residue. Na(+)-binding residues include glycine 163, cysteine 166, and threonine 169.

It belongs to the peptidase T1B family. HslV subfamily. In terms of assembly, a double ring-shaped homohexamer of HslV is capped on each side by a ring-shaped HslU homohexamer. The assembly of the HslU/HslV complex is dependent on binding of ATP.

It is found in the cytoplasm. It catalyses the reaction ATP-dependent cleavage of peptide bonds with broad specificity.. With respect to regulation, allosterically activated by HslU binding. Protease subunit of a proteasome-like degradation complex believed to be a general protein degrading machinery. This is ATP-dependent protease subunit HslV from Alcanivorax borkumensis (strain ATCC 700651 / DSM 11573 / NCIMB 13689 / SK2).